The chain runs to 286 residues: Release factor glutamine methyltransferase (286 aa).

S-adenosyl-L-methionine contacts are provided by residues 121–125 (GTGTG), Asp-144, Trp-172, and Asn-188. 188–191 (NPPY) is a substrate binding site.

This sequence belongs to the protein N5-glutamine methyltransferase family. PrmC subfamily.

It catalyses the reaction L-glutaminyl-[peptide chain release factor] + S-adenosyl-L-methionine = N(5)-methyl-L-glutaminyl-[peptide chain release factor] + S-adenosyl-L-homocysteine + H(+). In terms of biological role, methylates the class 1 translation termination release factors RF1/PrfA and RF2/PrfB on the glutamine residue of the universally conserved GGQ motif. This Vibrio cholerae serotype O1 (strain ATCC 39315 / El Tor Inaba N16961) protein is Release factor glutamine methyltransferase.